A 423-amino-acid chain; its full sequence is Aspartate--tRNA(Asp) ligase (423 aa).

Position 163 (Glu-163) interacts with L-aspartate. Residues 185-188 (QLYK) form an aspartate region. Arg-207 serves as a coordination point for L-aspartate. ATP is bound by residues 207-209 (RAE), 215-217 (RHL), and Glu-346. 2 residues coordinate Mg(2+): Glu-346 and Ser-349. L-aspartate-binding residues include Ser-349 and Arg-353. 394–397 (GLER) serves as a coordination point for ATP.

The protein belongs to the class-II aminoacyl-tRNA synthetase family. Type 2 subfamily. As to quaternary structure, homodimer. It depends on Mg(2+) as a cofactor.

It localises to the cytoplasm. It carries out the reaction tRNA(Asp) + L-aspartate + ATP = L-aspartyl-tRNA(Asp) + AMP + diphosphate. Its function is as follows. Catalyzes the attachment of L-aspartate to tRNA(Asp) in a two-step reaction: L-aspartate is first activated by ATP to form Asp-AMP and then transferred to the acceptor end of tRNA(Asp). The chain is Aspartate--tRNA(Asp) ligase from Picrophilus torridus (strain ATCC 700027 / DSM 9790 / JCM 10055 / NBRC 100828 / KAW 2/3).